The primary structure comprises 1227 residues: DNA-directed RNA polymerase subunit beta' (1227 aa).

The Zn(2+) site is built by cysteine 60, cysteine 62, cysteine 75, and cysteine 78. Aspartate 449, aspartate 451, and aspartate 453 together coordinate Mg(2+). Zn(2+)-binding residues include cysteine 847, cysteine 921, cysteine 928, and cysteine 931.

Belongs to the RNA polymerase beta' chain family. In terms of assembly, the RNAP catalytic core consists of 2 alpha, 1 beta, 1 beta' and 1 omega subunit. When a sigma factor is associated with the core the holoenzyme is formed, which can initiate transcription. It depends on Mg(2+) as a cofactor. The cofactor is Zn(2+).

The enzyme catalyses RNA(n) + a ribonucleoside 5'-triphosphate = RNA(n+1) + diphosphate. In terms of biological role, DNA-dependent RNA polymerase catalyzes the transcription of DNA into RNA using the four ribonucleoside triphosphates as substrates. This Lysinibacillus sphaericus (strain C3-41) protein is DNA-directed RNA polymerase subunit beta'.